A 156-amino-acid polypeptide reads, in one-letter code: Small ribosomal subunit protein uS7 (156 aa).

Belongs to the universal ribosomal protein uS7 family. As to quaternary structure, part of the 30S ribosomal subunit. Contacts proteins S9 and S11.

One of the primary rRNA binding proteins, it binds directly to 16S rRNA where it nucleates assembly of the head domain of the 30S subunit. Is located at the subunit interface close to the decoding center, probably blocks exit of the E-site tRNA. In Onion yellows phytoplasma (strain OY-M), this protein is Small ribosomal subunit protein uS7.